The sequence spans 373 residues: Mannitol-1-phosphate 5-dehydrogenase (373 aa).

3 to 14 contacts NAD(+); it reads ALHFGAGNIGRG.

It belongs to the mannitol dehydrogenase family.

It catalyses the reaction D-mannitol 1-phosphate + NAD(+) = beta-D-fructose 6-phosphate + NADH + H(+). The sequence is that of Mannitol-1-phosphate 5-dehydrogenase from Bacillus velezensis (strain DSM 23117 / BGSC 10A6 / LMG 26770 / FZB42) (Bacillus amyloliquefaciens subsp. plantarum).